Reading from the N-terminus, the 98-residue chain is NADH-ubiquinone oxidoreductase chain 4L (98 aa).

Transmembrane regions (helical) follow at residues 1–21, 29–49, and 58–78; these read MPII…GMLI, SLLC…LMAL, and IVPI…LALL.

This sequence belongs to the complex I subunit 4L family. In terms of assembly, core subunit of respiratory chain NADH dehydrogenase (Complex I) which is composed of 45 different subunits.

Its subcellular location is the mitochondrion inner membrane. The enzyme catalyses a ubiquinone + NADH + 5 H(+)(in) = a ubiquinol + NAD(+) + 4 H(+)(out). Core subunit of the mitochondrial membrane respiratory chain NADH dehydrogenase (Complex I) which catalyzes electron transfer from NADH through the respiratory chain, using ubiquinone as an electron acceptor. Part of the enzyme membrane arm which is embedded in the lipid bilayer and involved in proton translocation. The sequence is that of NADH-ubiquinone oxidoreductase chain 4L (MT-ND4L) from Nasalis larvatus (Proboscis monkey).